Reading from the N-terminus, the 131-residue chain is Small ribosomal subunit protein uS9 (131 aa).

The protein belongs to the universal ribosomal protein uS9 family.

This chain is Small ribosomal subunit protein uS9, found in Actinobacillus pleuropneumoniae serotype 5b (strain L20).